The chain runs to 258 residues: Global transcriptional regulator CodY (258 aa).

The segment at 1–156 (MSSLLEKTRQ…SATIIGLEIL (156 aa)) is GAF domain. The segment at residues 204-223 (ASKIADKVGITRSVIVNALR) is a DNA-binding region (H-T-H motif).

This sequence belongs to the CodY family.

The protein localises to the cytoplasm. Its function is as follows. DNA-binding global transcriptional regulator which is involved in the adaptive response to starvation and acts by directly or indirectly controlling the expression of numerous genes in response to nutrient availability. During rapid exponential growth, CodY is highly active and represses genes whose products allow adaptation to nutrient depletion. The sequence is that of Global transcriptional regulator CodY from Clostridium tetani (strain Massachusetts / E88).